We begin with the raw amino-acid sequence, 329 residues long: GTP 3',8-cyclase (329 aa).

In terms of domain architecture, Radical SAM core spans 8-234; sequence AFARKFYYLR…QLRQRSDGPA (227 aa). Arg-17 is a GTP binding site. Cys-24 and Cys-28 together coordinate [4Fe-4S] cluster. An S-adenosyl-L-methionine-binding site is contributed by Tyr-30. Cys-31 is a binding site for [4Fe-4S] cluster. Arg-68 is a GTP binding site. Gly-72 lines the S-adenosyl-L-methionine pocket. A GTP-binding site is contributed by Thr-99. Ser-123 is a binding site for S-adenosyl-L-methionine. Residue Lys-160 coordinates GTP. Met-194 contributes to the S-adenosyl-L-methionine binding site. Cys-257 and Cys-260 together coordinate [4Fe-4S] cluster. Residue 262-264 participates in GTP binding; it reads RLR. Cys-274 contacts [4Fe-4S] cluster.

Belongs to the radical SAM superfamily. MoaA family. In terms of assembly, monomer and homodimer. [4Fe-4S] cluster serves as cofactor.

The enzyme catalyses GTP + AH2 + S-adenosyl-L-methionine = (8S)-3',8-cyclo-7,8-dihydroguanosine 5'-triphosphate + 5'-deoxyadenosine + L-methionine + A + H(+). The protein operates within cofactor biosynthesis; molybdopterin biosynthesis. Catalyzes the cyclization of GTP to (8S)-3',8-cyclo-7,8-dihydroguanosine 5'-triphosphate. The chain is GTP 3',8-cyclase from Shigella sonnei (strain Ss046).